We begin with the raw amino-acid sequence, 922 residues long: Pertactin autotransporter (922 aa).

The signal sequence occupies residues 1-34; sequence MNMSLSRIVKAAPLRRTTLAMALGALGAAPAAYA. A Cell attachment site; involved in adhesion to various eukaryotic cell lines motif is present at residues 260 to 262; the sequence is RGD. 3 consecutive repeat copies span residues 266–270, 271–275, and 276–280. The tract at residues 266 to 290 is 4 X 5 AA tandem repeats of G-G-A-V-P; it reads GGAVPGGAVPGGAVPGGFGPLLDGW. The stretch at 281–285 is one 4; approximate repeat; sequence GGFGP. The disordered stretch occupies residues 561–619; it reads SLVGAKAPPAPKPAPQPGPQPGPQPPQPPQPPQPPQPPQPPQRQPEAPAPQPPAGRELS. A compositionally biased stretch (pro residues) spans 568-613; sequence PPAPKPAPQPGPQPGPQPPQPPQPPQPPQPPQPPQRQPEAPAPQPP. A 9 X 3 AA approximate repeats of P-Q-P region spans residues 575 to 603; it reads PQPGPQPGPQPPQPPQPPQPPQPPQPPQR. The 269-residue stretch at 654 to 922 folds into the Autotransporter domain; that stretch reads LNPDAGGAWG…TFHAGYRYSW (269 aa).

As to quaternary structure, monomer.

The protein localises to the periplasm. It is found in the secreted. It localises to the cell surface. The protein resides in the cell outer membrane. Functionally, agglutinogen that binds to eukaryotic cells; a process mediated by the R-G-D sequence. Pertactin may have a role in bacterial adhesion, and thus play a role in virulence. May contribute to the disease state of whooping cough. The protein is Pertactin autotransporter (prn) of Bordetella parapertussis (strain 12822 / ATCC BAA-587 / NCTC 13253).